The following is a 218-amino-acid chain: MELIRYADINSDLYRHIWVVGDIHGCYSLLLTRLAQLNFSPDTDLLISTGDNIDRGKENLETLRLLNTPWFISVVGNHEAMALDAFETQDGNFWYVNGGYWYDSVTEKDRQEATELLLTFKQRPHIIEVETSSKKYVIAHADYPDDSYDYGKQVDIDSVLWSRDRLLGSLQGNIHPIRGADTFIFGHMIVDYTTTFANQIYIDTGSFCSGNLSFFKIK.

The Mn(2+) site is built by aspartate 22, histidine 24, aspartate 51, and asparagine 77. Histidine 78 acts as the Proton donor in catalysis. Position 187 (histidine 187) interacts with Mn(2+).

Belongs to the PPP phosphatase family. PP-1 subfamily. The cofactor is Mn(2+).

The enzyme catalyses O-phospho-L-seryl-[protein] + H2O = L-seryl-[protein] + phosphate. It carries out the reaction O-phospho-L-threonyl-[protein] + H2O = L-threonyl-[protein] + phosphate. Inhibited by cadmium, copper, zinc when added activity but with less efficiency. Its function is as follows. Can hydrolyze phosphorylated Ser-, Thr- or Tyr-substrates in vitro. The natural substrate is unknown. The protein is Serine/threonine-protein phosphatase 2 (pphB) of Salmonella typhimurium (strain LT2 / SGSC1412 / ATCC 700720).